Here is a 682-residue protein sequence, read N- to C-terminus: Heat shock 70 kDa protein, mitochondrial (682 aa).

A mitochondrion-targeting transit peptide spans M1–N57. The segment at G649–K682 is disordered. Over residues G655 to G668 the composition is skewed to gly residues. A compositionally biased stretch (acidic residues) spans P673 to K682.

Belongs to the heat shock protein 70 family.

The protein resides in the mitochondrion. The polypeptide is Heat shock 70 kDa protein, mitochondrial (HSP68) (Solanum tuberosum (Potato)).